The following is a 401-amino-acid chain: MEALGIIVEYNPLHNGHLYHLEESIKLTKCQYVVAVMSGNFVQRGEPAIVDKWKRAEMALKAGVDLVIELPVVYATSTAENFAYGAVKLLDSLKVIDCIAFGSEEGDLEKLSKIADILLEEPPDYKRALKENLGKGLTFAKARELALVKVTGDESISKTLQTSNNILGIEYLKALKKIKSSIVPFTIKRRGALYTSLKLEGEFASATSIRKAIEEKGIKAVKNYVPDFTLKILERAFKEGQGPVYLQDFSPIILYLLRSGHPLENIFDVAEGIDNKIYKAASMTNNIKDLIKLTKSKRYTESRIRHILLHLLLKIDKKLFKEFDGPNYIRVLGFSEKGKTILKEIKKKTELPIITKVAQYKSKIEDSRMFERDLFATDVYTLAYKNFAISKLDFFHPIIKL.

ATP is bound by residues Ile-7–His-20, Gly-102, Asn-164, and Arg-189.

The protein belongs to the TmcAL family.

The protein localises to the cytoplasm. The enzyme catalyses cytidine(34) in elongator tRNA(Met) + acetate + ATP = N(4)-acetylcytidine(34) in elongator tRNA(Met) + AMP + diphosphate. Functionally, catalyzes the formation of N(4)-acetylcytidine (ac(4)C) at the wobble position of elongator tRNA(Met), using acetate and ATP as substrates. First activates an acetate ion to form acetyladenylate (Ac-AMP) and then transfers the acetyl group to tRNA to form ac(4)C34. The polypeptide is tRNA(Met) cytidine acetate ligase (Caldanaerobacter subterraneus subsp. tengcongensis (strain DSM 15242 / JCM 11007 / NBRC 100824 / MB4) (Thermoanaerobacter tengcongensis)).